Reading from the N-terminus, the 255-residue chain is F-box only protein 44 (255 aa).

In terms of domain architecture, F-box spans 3–50 (VGNINELPENILLELFIHIPARQLLLRCRPVCSLWRDLIDLVTLWKRK). Positions 71 to 252 (FYFLRSLQRN…VTNSSITIGP (182 aa)) constitute an FBA domain.

As to quaternary structure, part of a SCF (SKP1-cullin-F-box) protein ligase complex. Interacts with SKP1 and CUL1. As to expression, expressed in brain, liver, pancreas and adipose tissue (at protein level). Widely expressed.

In terms of biological role, substrate-recognition component of the SCF (SKP1-CUL1-F-box protein)-type E3 ubiquitin ligase complex. In Mus musculus (Mouse), this protein is F-box only protein 44 (Fbxo44).